A 143-amino-acid polypeptide reads, in one-letter code: Transcriptional regulator MraZ (143 aa).

2 consecutive SpoVT-AbrB domains span residues 5–47 and 76–119; these read QYEH…SLEE and AVEC…SKEV.

The protein belongs to the MraZ family. Forms oligomers.

It is found in the cytoplasm. The protein localises to the nucleoid. The polypeptide is Transcriptional regulator MraZ (Thermoanaerobacter sp. (strain X514)).